The primary structure comprises 508 residues: UDP-N-acetylmuramoyl-L-alanyl-D-glutamate--L-lysine ligase (508 aa).

S47 serves as a coordination point for UDP-N-acetyl-alpha-D-muramoyl-L-alanyl-D-glutamate. 124–130 (GTKGKTT) is a binding site for ATP. UDP-N-acetyl-alpha-D-muramoyl-L-alanyl-D-glutamate contacts are provided by residues 168–169 (TT), S195, and R203. K237 carries the N6-carboxylysine modification. An L-lysine recognition motif motif is present at residues 425–428 (DDPA).

It belongs to the MurCDEF family. MurE subfamily. In terms of processing, carboxylation is probably crucial for Mg(2+) binding and, consequently, for the gamma-phosphate positioning of ATP.

The protein localises to the cytoplasm. It catalyses the reaction UDP-N-acetyl-alpha-D-muramoyl-L-alanyl-D-glutamate + L-lysine + ATP = UDP-N-acetyl-alpha-D-muramoyl-L-alanyl-gamma-D-glutamyl-L-lysine + ADP + phosphate + H(+). It participates in cell wall biogenesis; peptidoglycan biosynthesis. Its function is as follows. Catalyzes the addition of L-lysine to the nucleotide precursor UDP-N-acetylmuramoyl-L-alanyl-D-glutamate (UMAG) in the biosynthesis of bacterial cell-wall peptidoglycan. The sequence is that of UDP-N-acetylmuramoyl-L-alanyl-D-glutamate--L-lysine ligase from Enterococcus faecalis (strain ATCC 700802 / V583).